Consider the following 385-residue polypeptide: Digeranylgeranylglycerophospholipid reductase 2 (385 aa).

FAD is bound by residues Ala13, Glu32, Cys43, Ala44, Gly46, Arg95, Ala119, Asp273, Gly285, and Ile286.

The protein belongs to the geranylgeranyl reductase family. DGGGPL reductase subfamily. FAD serves as cofactor.

It catalyses the reaction a 2,3-bis-O-phytanyl-sn-glycerol 1-phospholipid + 8 A = a 2,3-bis-O-(geranylgeranyl)-sn-glycerol 1-phospholipid + 8 AH2. The catalysed reaction is 2,3-bis-O-(phytanyl)-sn-glycerol 1-phosphate + 8 A = 2,3-bis-O-(geranylgeranyl)-sn-glycerol 1-phosphate + 8 AH2. It carries out the reaction CDP-2,3-bis-O-(geranylgeranyl)-sn-glycerol + 8 AH2 = CDP-2,3-bis-O-(phytanyl)-sn-glycerol + 8 A. The enzyme catalyses archaetidylserine + 8 AH2 = 2,3-bis-O-phytanyl-sn-glycero-3-phospho-L-serine + 8 A. It functions in the pathway membrane lipid metabolism; glycerophospholipid metabolism. Is involved in the reduction of 2,3-digeranylgeranylglycerophospholipids (unsaturated archaeols) into 2,3-diphytanylglycerophospholipids (saturated archaeols) in the biosynthesis of archaeal membrane lipids. Catalyzes the formation of archaetidic acid (2,3-di-O-phytanyl-sn-glyceryl phosphate) from 2,3-di-O-geranylgeranylglyceryl phosphate (DGGGP) via the hydrogenation of each double bond of the isoprenoid chains. Is also probably able to reduce double bonds of geranyl groups in CDP-2,3-bis-O-(geranylgeranyl)-sn-glycerol and archaetidylserine, thus acting at various stages in the biosynthesis of archaeal membrane lipids. The polypeptide is Digeranylgeranylglycerophospholipid reductase 2 (Methanothermobacter thermautotrophicus (strain ATCC 29096 / DSM 1053 / JCM 10044 / NBRC 100330 / Delta H) (Methanobacterium thermoautotrophicum)).